Here is a 339-residue protein sequence, read N- to C-terminus: tRNA N6-adenosine threonylcarbamoyltransferase (339 aa).

Fe cation is bound by residues His-111 and His-115. Substrate contacts are provided by residues 134–138 (LVSGG), Asp-167, Gly-180, and Asn-272. Residue Asp-300 coordinates Fe cation.

This sequence belongs to the KAE1 / TsaD family. Fe(2+) is required as a cofactor.

It localises to the cytoplasm. It catalyses the reaction L-threonylcarbamoyladenylate + adenosine(37) in tRNA = N(6)-L-threonylcarbamoyladenosine(37) in tRNA + AMP + H(+). Its function is as follows. Required for the formation of a threonylcarbamoyl group on adenosine at position 37 (t(6)A37) in tRNAs that read codons beginning with adenine. Is involved in the transfer of the threonylcarbamoyl moiety of threonylcarbamoyl-AMP (TC-AMP) to the N6 group of A37, together with TsaE and TsaB. TsaD likely plays a direct catalytic role in this reaction. This chain is tRNA N6-adenosine threonylcarbamoyltransferase, found in Vibrio vulnificus (strain YJ016).